The chain runs to 93 residues: Small ribosomal subunit protein uS19 (93 aa).

Disordered regions lie at residues 1 to 25 (MPRS…QNTK) and 74 to 93 (FAPT…ARRR). Basic and acidic residues-rich tracts occupy residues 14 to 23 (HLQKKVDDQN) and 81 to 93 (RGHD…ARRR).

It belongs to the universal ribosomal protein uS19 family.

In terms of biological role, protein S19 forms a complex with S13 that binds strongly to the 16S ribosomal RNA. The chain is Small ribosomal subunit protein uS19 from Beutenbergia cavernae (strain ATCC BAA-8 / DSM 12333 / CCUG 43141 / JCM 11478 / NBRC 16432 / NCIMB 13614 / HKI 0122).